Consider the following 485-residue polypeptide: Putative ATP-dependent RNA helicase ste13 (485 aa).

A disordered region spans residues 16–38 (DRESFKGQMKAQPVDMRPKTEDV). The short motif at 44-72 (TEFEDYYLKRELLMGIFEAGFERPSPIQE) is the Q motif element. One can recognise a Helicase ATP-binding domain in the interval 75 to 245 (IPIALSGRDI…DKHLNKPYEI (171 aa)). 88–95 (AKNGTGKT) provides a ligand contact to ATP. Residues 193–196 (DEAD) carry the DEAD box motif. The Helicase C-terminal domain occupies 255–415 (GVTQYYAFVD…PIPPSIDPSL (161 aa)). Residues 437–485 (LAAQQAKGQEGYHNRPNNNRGGHPRGGGNRGGYRQSNRQPRYRGQQKAD) form a disordered region.

Belongs to the DEAD box helicase family. DDX6/DHH1 subfamily.

It is found in the cytoplasm. Its subcellular location is the P-body. The enzyme catalyses ATP + H2O = ADP + phosphate + H(+). In terms of biological role, ATP-dependent RNA helicase involved in mRNA turnover, and more specifically in mRNA decapping. Is involved in G1/S DNA-damage checkpoint recovery, probably through the regulation of the translational status of a subset of mRNAs. May also have a role in translation and mRNA nuclear export. The protein is Putative ATP-dependent RNA helicase ste13 (ste13) of Schizosaccharomyces pombe (strain 972 / ATCC 24843) (Fission yeast).